The primary structure comprises 519 residues: Keratin, type II cytoskeletal 1b (519 aa).

A head region spans residues 1–166 (MSRQFSSQSA…DPEIQKIKTQ (166 aa)). Omega-N-methylarginine is present on residues R81 and R95. A coil 1A region spans residues 167–202 (EREQIKTLNNKFASFIDKVRFLEQQNQVLQTKWELL). The IF rod domain occupies 167 to 480 (EREQIKTLNN…ELLEGEESRM (314 aa)). Residues 203–221 (QQVNTSTRTSSLEPIFEEF) are linker 1. Residues 222-313 (INQLQRQVDV…YLFDTELSQI (92 aa)) are coil 1B. The segment at 314–337 (QTHVSDTNVILSMDNNRSLDLDSI) is linker 12. Residues 338–476 (INAVRTQYEL…ATYRELLEGE (139 aa)) form a coil 2 region. The segment at 477–519 (ESRMSGALQSQVSIWALPSNEGNDLGERLHDPQSQVPVPKLGC) is tail. A disordered region spans residues 499-519 (NDLGERLHDPQSQVPVPKLGC).

This sequence belongs to the intermediate filament family. In terms of processing, undergoes deimination of some arginine residues (citrullination).

In Rattus norvegicus (Rat), this protein is Keratin, type II cytoskeletal 1b (Krt77).